A 409-amino-acid chain; its full sequence is Glutamyl-tRNA reductase (409 aa).

Substrate contacts are provided by residues 48-51 (TCNR), serine 89, 94-96 (ENE), and glutamine 100. Cysteine 49 acts as the Nucleophile in catalysis. 165–170 (GNGMLA) is an NADP(+) binding site.

It belongs to the glutamyl-tRNA reductase family. As to quaternary structure, homodimer.

It catalyses the reaction (S)-4-amino-5-oxopentanoate + tRNA(Glu) + NADP(+) = L-glutamyl-tRNA(Glu) + NADPH + H(+). The protein operates within porphyrin-containing compound metabolism; protoporphyrin-IX biosynthesis; 5-aminolevulinate from L-glutamyl-tRNA(Glu): step 1/2. Its function is as follows. Catalyzes the NADPH-dependent reduction of glutamyl-tRNA(Glu) to glutamate 1-semialdehyde (GSA). The polypeptide is Glutamyl-tRNA reductase (Thermoplasma volcanium (strain ATCC 51530 / DSM 4299 / JCM 9571 / NBRC 15438 / GSS1)).